We begin with the raw amino-acid sequence, 298 residues long: Ankyrin repeat domain-containing protein 29 (298 aa).

ANK repeat units follow at residues 8–38 (PLAN…DVDC), 42–71 (YGTT…DINL), 75–104 (TGST…STEF), 108–137 (DGGT…NVHD), 141–170 (DGAT…KVNQ), 174–203 (DGTA…DRDA), 207–236 (DGST…SLGI), and 239–268 (NGST…DPAL).

The protein is Ankyrin repeat domain-containing protein 29 (ankrd29) of Danio rerio (Zebrafish).